The chain runs to 472 residues: MDYFPIFCQLQNKACLLVGGGEVAERKARLLLDAGAAVTVNACEFTEQFHDWAEQGLLSLVSGEFAPELLAEKWLVIAATDQVAVNALVYQSANQQRVFCNVVDDPKRTSFIMPSIIDRSPIMIAISSGGKAPVLARLLREKLEAMLPQHLGQLAQLAGNLRQRVKQHFAAMTDRRRFWEKLLTHDRLAQSLANEDQVQVEQHVEQLFNAPLSDRGEVVLVGAGPGDAGLLTLKGLQQIQQADVVVYDRLVSDEVMNLVRRDAERIFVGKESGRHTVPQDQINQILLQQAQQGKRVVRLKGGDPFIFGRGGEELETLADYNIPFSVVPGITAASGCSAYSGIPLTHRDHAQSVRLITGHAKKDSQLDWANLAAEKQTLVFYMGLSQAGEIQQQLIRHGMPAATPVALVENGTSRHQRVVSGELSQLALLSQQVSSPSLIIVGSVVSLREKLNWFSSAEHGKTGMKEQVERVG.

Residues 1–204 (MDYFPIFCQL…EDQVQVEQHV (204 aa)) form a precorrin-2 dehydrogenase /sirohydrochlorin ferrochelatase region. NAD(+)-binding positions include 22 to 23 (EV) and 43 to 44 (CE). At Ser128 the chain carries Phosphoserine. The interval 216-472 (GEVVLVGAGP…GMKEQVERVG (257 aa)) is uroporphyrinogen-III C-methyltransferase. Pro225 contributes to the S-adenosyl-L-methionine binding site. Asp248 acts as the Proton acceptor in catalysis. Residue Lys270 is the Proton donor of the active site. S-adenosyl-L-methionine contacts are provided by residues 301 to 303 (GGD), Ile306, 331 to 332 (TA), Met382, and Gly411.

This sequence in the N-terminal section; belongs to the precorrin-2 dehydrogenase / sirohydrochlorin ferrochelatase family. It in the C-terminal section; belongs to the precorrin methyltransferase family.

It catalyses the reaction uroporphyrinogen III + 2 S-adenosyl-L-methionine = precorrin-2 + 2 S-adenosyl-L-homocysteine + H(+). It carries out the reaction precorrin-2 + NAD(+) = sirohydrochlorin + NADH + 2 H(+). The catalysed reaction is siroheme + 2 H(+) = sirohydrochlorin + Fe(2+). Its pathway is cofactor biosynthesis; adenosylcobalamin biosynthesis; precorrin-2 from uroporphyrinogen III: step 1/1. The protein operates within cofactor biosynthesis; adenosylcobalamin biosynthesis; sirohydrochlorin from precorrin-2: step 1/1. It functions in the pathway porphyrin-containing compound metabolism; siroheme biosynthesis; precorrin-2 from uroporphyrinogen III: step 1/1. It participates in porphyrin-containing compound metabolism; siroheme biosynthesis; siroheme from sirohydrochlorin: step 1/1. Its pathway is porphyrin-containing compound metabolism; siroheme biosynthesis; sirohydrochlorin from precorrin-2: step 1/1. In terms of biological role, multifunctional enzyme that catalyzes the SAM-dependent methylations of uroporphyrinogen III at position C-2 and C-7 to form precorrin-2 via precorrin-1. Then it catalyzes the NAD-dependent ring dehydrogenation of precorrin-2 to yield sirohydrochlorin. Finally, it catalyzes the ferrochelation of sirohydrochlorin to yield siroheme. The protein is Siroheme synthase 2 of Yersinia enterocolitica serotype O:8 / biotype 1B (strain NCTC 13174 / 8081).